The following is a 715-amino-acid chain: 1,4-alpha-glucan branching enzyme GlgB (715 aa).

D396 functions as the Nucleophile in the catalytic mechanism. E449 serves as the catalytic Proton donor.

Belongs to the glycosyl hydrolase 13 family. GlgB subfamily. Monomer.

The enzyme catalyses Transfers a segment of a (1-&gt;4)-alpha-D-glucan chain to a primary hydroxy group in a similar glucan chain.. The protein operates within glycan biosynthesis; glycogen biosynthesis. Catalyzes the formation of the alpha-1,6-glucosidic linkages in glycogen by scission of a 1,4-alpha-linked oligosaccharide from growing alpha-1,4-glucan chains and the subsequent attachment of the oligosaccharide to the alpha-1,6 position. This is 1,4-alpha-glucan branching enzyme GlgB from Vibrio vulnificus (strain YJ016).